The following is a 550-amino-acid chain: Hydroxylamine reductase (550 aa).

Residues C3, C6, C18, and C25 each contribute to the [2Fe-2S] cluster site. Hybrid [4Fe-2O-2S] cluster is bound by residues H249, E273, C317, C405, C433, C458, E492, and K494. A Cysteine persulfide modification is found at C405.

The protein belongs to the HCP family. [2Fe-2S] cluster is required as a cofactor. Hybrid [4Fe-2O-2S] cluster serves as cofactor.

It is found in the cytoplasm. It catalyses the reaction A + NH4(+) + H2O = hydroxylamine + AH2 + H(+). Functionally, catalyzes the reduction of hydroxylamine to form NH(3) and H(2)O. The polypeptide is Hydroxylamine reductase (Shigella boydii serotype 18 (strain CDC 3083-94 / BS512)).